The chain runs to 341 residues: uncharacterized protein (341 aa).

The segment covering 1 to 12 has biased composition (basic residues); that stretch reads NSRIAHVPKSKK. Disordered stretches follow at residues 1 to 21 and 291 to 317; these read NSRIAHVPKSKKPLNSASPRF and KARMQMSGKNYQQRPSRTTSPAVNPED. The segment covering 297 to 312 has biased composition (polar residues); sequence SGKNYQQRPSRTTSPA.

This is an uncharacterized protein from Lachancea kluyveri (strain ATCC 58438 / CBS 3082 / BCRC 21498 / NBRC 1685 / JCM 7257 / NCYC 543 / NRRL Y-12651) (Yeast).